A 911-amino-acid chain; its full sequence is FIGNL1-interacting regulator of recombination and mitosis (911 aa).

Residues 830-853 (SEKSQPAQTPLTEEPCAKRARQET) form a disordered region. Over residues 844-853 (PCAKRARQET) the composition is skewed to basic and acidic residues.

The protein resides in the chromosome. It is found in the centromere. It localises to the kinetochore. Its subcellular location is the nucleus. The protein localises to the midbody. The protein resides in the cytoplasm. It is found in the cytoskeleton. It localises to the spindle. In terms of biological role, may play a role in chromosome segregation. The sequence is that of FIGNL1-interacting regulator of recombination and mitosis from Danio rerio (Zebrafish).